We begin with the raw amino-acid sequence, 70 residues long: Cold shock protein CspV (70 aa).

Positions Gly-7–Val-67 constitute a CSD domain.

It is found in the cytoplasm. The chain is Cold shock protein CspV (cspV) from Vibrio cholerae serotype O1 (strain ATCC 39315 / El Tor Inaba N16961).